The primary structure comprises 105 residues: UPF0235 protein RAF_ORF1191 (105 aa).

This sequence belongs to the UPF0235 family.

This is UPF0235 protein RAF_ORF1191 from Rickettsia africae (strain ESF-5).